Reading from the N-terminus, the 361-residue chain is POU domain, class 3, transcription factor 4 (361 aa).

2 disordered regions span residues 99–131 (PHVA…GQPL) and 144–192 (MLEH…PTSD). Polar residues predominate over residues 119–131 (APNSSITNSGQPL). The span at 165–183 (VLREPPDHGELGSHHCQDH) shows a compositional bias: basic and acidic residues. Positions 186-260 (EETPTSDELE…LLNKWLEEAD (75 aa)) constitute a POU-specific domain. Ser265 carries the phosphoserine modification. Residues 278 to 337 (KRKKRTSIEVSVKGVLETHFLKCPKPAAQEISSLADSLQLEKEVVRVWFCNRRQKEKRMT) constitute a DNA-binding region (homeobox). The interval 334-361 (KRMTPPGDQQPHEVYSHTVKTDASCHDL) is disordered. Over residues 343 to 361 (QPHEVYSHTVKTDASCHDL) the composition is skewed to basic and acidic residues.

The protein belongs to the POU transcription factor family. Class-3 subfamily.

The protein localises to the nucleus. Its function is as follows. Probable transcription factor which exert its primary action widely during early neural development and in a very limited set of neurons in the mature brain. The polypeptide is POU domain, class 3, transcription factor 4 (Pou3f4) (Mesocricetus auratus (Golden hamster)).